The chain runs to 704 residues: G-protein coupled receptor-associated protein LMBRD2B (704 aa).

Over 1–3 (MSG) the chain is Extracellular. Residues 4–21 (AALGIEIVVVFFLALFLL) form a helical membrane-spanning segment. Over 22 to 33 (HRYGDFKKQQRM) the chain is Cytoplasmic. A helical membrane pass occupies residues 34–54 (VLFGTLLAWYLCFLIVFILPL). Topologically, residues 55–111 (DVSTTIYNQCLIDQEAQTQTPSVSPVLSEQTTANASISPAKSTQRVCYKPWSYIPDG) are extracellular. The N-linked (GlcNAc...) asparagine glycan is linked to Asn88. A helical transmembrane segment spans residues 112 to 132 (IMPVFWRVVYWTSQCLTWLLL). The Cytoplasmic portion of the chain corresponds to 133–157 (PFMQSYARSGGFTITGKIKTALIEN). The helical transmembrane segment at 158–178 (AIYYGTYLFIFGSLLIYVAVH) threads the bilayer. Over 179 to 192 (PQWHLSWYELQTIG) the chain is Extracellular. The helical transmembrane segment at 193–213 (ITAANTWGLFLLVLLLGYGLV) threads the bilayer. Over 214–393 (DIPRSYWEAS…ECLLKQWFYR (180 aa)) the chain is Cytoplasmic. Residues 235 to 266 (KAAKLMTEKADSEENLEDVMEEVRKINESIKY) are a coiled coil. A helical transmembrane segment spans residues 394-414 (VLAVVLALFSVAVVWSECTFF). The Extracellular portion of the chain corresponds to 415–438 (STHPVLSLFAVFIQLAERDYNYLY). The helical transmembrane segment at 439-459 (IEMACFITIFFLCTCVYSTVF) threads the bilayer. Over 460 to 481 (RIRVFNYYYLASHHQTDAYSLQ) the chain is Cytoplasmic. The helical transmembrane segment at 482–502 (FSGMLFCRLTPPLCLNFLGLI) threads the bilayer. The Extracellular segment spans residues 503 to 527 (HMDSAISHQAKKQTAYTSIMGSMRV). Residues 528-548 (LSFIANGFYIYYPMLIVVLCI) form a helical membrane-spanning segment. Topologically, residues 549–704 (ATYFSLGTRC…SSRNRIFDDV (156 aa)) are cytoplasmic. Positions 576 to 612 (DLIDEGRELLRRERRKRQRIEDGENRRREWRERYAQR) form a coiled coil. Disordered stretches follow at residues 613 to 654 (DENA…QSGR) and 672 to 704 (TLTD…FDDV). Positions 631 to 654 (YGETLNANTNRQAKYTRSGSQSGR) are enriched in polar residues.

This sequence belongs to the LIMR family.

It is found in the cell membrane. May associate with G-protein coupled receptors and regulate downstream signaling pathways. The polypeptide is G-protein coupled receptor-associated protein LMBRD2B (lmbrd2b) (Danio rerio (Zebrafish)).